Reading from the N-terminus, the 192-residue chain is Ion-translocating oxidoreductase complex subunit B (192 aa).

Residues 1-26 (MNTIWIAVGALTLLGLVFGAILGYAS) form a hydrophobic region. Positions 32–91 (EDDPVVEKIDAILPQSQCGQCGYPGCRPYAEAVGLQGEKINRCAPGGEAVMLKMAELLNV) constitute a 4Fe-4S domain. The [4Fe-4S] cluster site is built by Cys-49, Cys-52, Cys-57, Cys-74, Cys-117, Cys-120, Cys-123, Cys-127, Cys-147, Cys-150, Cys-153, and Cys-157. 4Fe-4S ferredoxin-type domains are found at residues 108 to 137 (MLAVIDENNCIGCTKCIQACPVDAIVGATR) and 138 to 167 (AMHTVMSDLCTGCNLCVDPCPTHCIELRPV).

The protein belongs to the 4Fe4S bacterial-type ferredoxin family. RnfB subfamily. The complex is composed of six subunits: RsxA, RsxB, RsxC, RsxD, RsxE and RsxG. The cofactor is [4Fe-4S] cluster.

It localises to the cell inner membrane. Functionally, part of a membrane-bound complex that couples electron transfer with translocation of ions across the membrane. Required to maintain the reduced state of SoxR. This Salmonella agona (strain SL483) protein is Ion-translocating oxidoreductase complex subunit B.